The sequence spans 444 residues: Ribosomal protein uS12 methylthiotransferase RimO (444 aa).

The MTTase N-terminal domain maps to 6 to 116 (PNIGFVSLGC…VMEHVHKYVP (111 aa)). [4Fe-4S] cluster is bound by residues cysteine 15, cysteine 51, cysteine 80, cysteine 148, cysteine 152, and cysteine 155. Residues 134-375 (LTPKHYAYLK…MQLQQEISAA (242 aa)) enclose the Radical SAM core domain. Residues 378 to 444 (QQKIGKTWKV…ADEYDLWGTC (67 aa)) form the TRAM domain.

This sequence belongs to the methylthiotransferase family. RimO subfamily. The cofactor is [4Fe-4S] cluster.

The protein localises to the cytoplasm. The enzyme catalyses L-aspartate(89)-[ribosomal protein uS12]-hydrogen + (sulfur carrier)-SH + AH2 + 2 S-adenosyl-L-methionine = 3-methylsulfanyl-L-aspartate(89)-[ribosomal protein uS12]-hydrogen + (sulfur carrier)-H + 5'-deoxyadenosine + L-methionine + A + S-adenosyl-L-homocysteine + 2 H(+). In terms of biological role, catalyzes the methylthiolation of an aspartic acid residue of ribosomal protein uS12. The sequence is that of Ribosomal protein uS12 methylthiotransferase RimO from Actinobacillus succinogenes (strain ATCC 55618 / DSM 22257 / CCUG 43843 / 130Z).